The sequence spans 122 residues: MKIILFLTLIALATCELYHYQECVRGTTVLLKEPCPSGTYEGNSPFHPLADNKFALTCSSTHFAFACADGTRHTYQLRARSVSPKLFIRQEEVYQELYSPLFLIVAALVFIILCFTIKRKTE.

The first 15 residues, 1–15, serve as a signal peptide directing secretion; sequence MKIILFLTLIALATC. In terms of domain architecture, X4e spans 16–81; it reads ELYHYQECVR…RHTYQLRARS (66 aa). Residues 16 to 96 lie on the Virion surface side of the membrane; that stretch reads ELYHYQECVR…FIRQEEVYQE (81 aa). Cystine bridges form between Cys-23–Cys-58 and Cys-35–Cys-67. Residues 97 to 117 traverse the membrane as a helical segment; it reads LYSPLFLIVAALVFIILCFTI. At 118-122 the chain is on the intravirion side; that stretch reads KRKTE. The Di-lysine motif signature appears at 118–122; it reads KRKTE.

As to quaternary structure, interacts with the spike glycoprotein, M protein, E protein and the accessory protein 3.

It is found in the virion. The protein localises to the host endoplasmic reticulum membrane. It localises to the host endoplasmic reticulum-Golgi intermediate compartment membrane. Its subcellular location is the host Golgi apparatus membrane. In terms of biological role, non-structural protein which is dispensable for virus replication in cell culture. This Bat coronavirus HKU3 (BtCoV) protein is Protein 7a.